A 301-amino-acid chain; its full sequence is B3 domain-containing protein At5g18090 (301 aa).

The TF-B3 1 DNA-binding region spans 18 to 113; it reads FFKILRSADL…CFTVDIYQID (96 aa). Disordered regions lie at residues 123–142 and 153–194; these read SATI…NNIY and SWSE…KMKV. Positions 133-142 are enriched in basic and acidic residues; that stretch reads NKREQRNNIY. A DNA-binding region (TF-B3 2) is located at residues 209 to 301; that stretch reads VPEFTLTIKK…PTEMLVRVSK (93 aa).

The protein resides in the nucleus. This Arabidopsis thaliana (Mouse-ear cress) protein is B3 domain-containing protein At5g18090.